Here is a 92-residue protein sequence, read N- to C-terminus: ATP synthase subunit c (92 aa).

A run of 2 helical transmembrane segments spans residues 20 to 40 and 71 to 91; these read GAGL…GTGL and MAIS…LVFV.

Belongs to the ATPase C chain family. In terms of assembly, F-type ATPases have 2 components, F(1) - the catalytic core - and F(0) - the membrane proton channel. F(1) has five subunits: alpha(3), beta(3), gamma(1), delta(1), epsilon(1). F(0) has three main subunits: a(1), b(2) and c(10-14). The alpha and beta chains form an alternating ring which encloses part of the gamma chain. F(1) is attached to F(0) by a central stalk formed by the gamma and epsilon chains, while a peripheral stalk is formed by the delta and b chains.

Its subcellular location is the cell membrane. Functionally, f(1)F(0) ATP synthase produces ATP from ADP in the presence of a proton or sodium gradient. F-type ATPases consist of two structural domains, F(1) containing the extramembraneous catalytic core and F(0) containing the membrane proton channel, linked together by a central stalk and a peripheral stalk. During catalysis, ATP synthesis in the catalytic domain of F(1) is coupled via a rotary mechanism of the central stalk subunits to proton translocation. In terms of biological role, key component of the F(0) channel; it plays a direct role in translocation across the membrane. A homomeric c-ring of between 10-14 subunits forms the central stalk rotor element with the F(1) delta and epsilon subunits. This chain is ATP synthase subunit c, found in Mycoplasmopsis pulmonis (strain UAB CTIP) (Mycoplasma pulmonis).